Reading from the N-terminus, the 152-residue chain is SsrA-binding protein (152 aa).

This sequence belongs to the SmpB family.

It is found in the cytoplasm. Its function is as follows. Required for rescue of stalled ribosomes mediated by trans-translation. Binds to transfer-messenger RNA (tmRNA), required for stable association of tmRNA with ribosomes. tmRNA and SmpB together mimic tRNA shape, replacing the anticodon stem-loop with SmpB. tmRNA is encoded by the ssrA gene; the 2 termini fold to resemble tRNA(Ala) and it encodes a 'tag peptide', a short internal open reading frame. During trans-translation Ala-aminoacylated tmRNA acts like a tRNA, entering the A-site of stalled ribosomes, displacing the stalled mRNA. The ribosome then switches to translate the ORF on the tmRNA; the nascent peptide is terminated with the 'tag peptide' encoded by the tmRNA and targeted for degradation. The ribosome is freed to recommence translation, which seems to be the essential function of trans-translation. In Gloeobacter violaceus (strain ATCC 29082 / PCC 7421), this protein is SsrA-binding protein.